Reading from the N-terminus, the 150-residue chain is Cell division protein SepF (150 aa).

The tract at residues 26–45 (DREEIPEEHESKDRTAYQSK) is disordered.

It belongs to the SepF family. As to quaternary structure, homodimer. Interacts with FtsZ.

It is found in the cytoplasm. Its function is as follows. Cell division protein that is part of the divisome complex and is recruited early to the Z-ring. Probably stimulates Z-ring formation, perhaps through the cross-linking of FtsZ protofilaments. Its function overlaps with FtsA. This is Cell division protein SepF from Bacillus licheniformis (strain ATCC 14580 / DSM 13 / JCM 2505 / CCUG 7422 / NBRC 12200 / NCIMB 9375 / NCTC 10341 / NRRL NRS-1264 / Gibson 46).